The following is a 123-amino-acid chain: MNIFIKQNSSTVKRRYPLQKFVLKFLWLEKNLAVTVDQVTNRGNSPITEYFFWPRKDAWEELKDALANKPWISYDESIALLNQTTDVINYWQEDEKKPSLSEAQAKFPNCIFTDKFANCLYEN.

This sequence belongs to the chloroplast-specific ribosomal protein cS23 family. Part of the 30S ribosomal subunit.

The protein resides in the plastid. The protein localises to the chloroplast. Probably a ribosomal protein or a ribosome-associated protein. The polypeptide is Small ribosomal subunit protein cS23 (ycf65) (Mesostigma viride (Green alga)).